Here is a 184-residue protein sequence, read N- to C-terminus: Ribosome-recycling factor (184 aa).

This sequence belongs to the RRF family.

The protein resides in the cytoplasm. Its function is as follows. Responsible for the release of ribosomes from messenger RNA at the termination of protein biosynthesis. May increase the efficiency of translation by recycling ribosomes from one round of translation to another. This chain is Ribosome-recycling factor, found in Hyphomonas neptunium (strain ATCC 15444).